Consider the following 42-residue polypeptide: Thymosin beta-10 (42 aa).

Composition is skewed to basic and acidic residues over residues 1–25 and 33–42; these read MADK…ETQE and ETIEQEKQAK. The segment at 1-42 is disordered; that stretch reads MADKPDLGEINSFDKAKLKKTETQEKNTLPTKETIEQEKQAK. An N-acetylalanine modification is found at Ala2. Lys4 carries the N6-acetyllysine modification. Ser12 carries the post-translational modification Phosphoserine. N6-acetyllysine is present on Lys15. 3 positions are modified to phosphothreonine: Thr21, Thr23, and Thr34. An N6-acetyllysine modification is found at Lys39.

Belongs to the thymosin beta family. As to expression, distributed in numerous types of tissues, including thymus, spleen, lung, liver and muscle.

It is found in the cytoplasm. The protein resides in the cytoskeleton. Its function is as follows. Plays an important role in the organization of the cytoskeleton. Binds to and sequesters actin monomers (G actin) and therefore inhibits actin polymerization. The chain is Thymosin beta-10 (TMSB10) from Bos taurus (Bovine).